The sequence spans 264 residues: 3-methyl-2-oxobutanoate hydroxymethyltransferase (264 aa).

Asp-45 and Asp-84 together coordinate Mg(2+). Residues 45 to 46 (DS), Asp-84, and Lys-112 contribute to the 3-methyl-2-oxobutanoate site. Glu-114 contributes to the Mg(2+) binding site. The Proton acceptor role is filled by Glu-181.

Belongs to the PanB family. As to quaternary structure, homodecamer; pentamer of dimers. It depends on Mg(2+) as a cofactor.

The protein resides in the cytoplasm. It catalyses the reaction 3-methyl-2-oxobutanoate + (6R)-5,10-methylene-5,6,7,8-tetrahydrofolate + H2O = 2-dehydropantoate + (6S)-5,6,7,8-tetrahydrofolate. The protein operates within cofactor biosynthesis; (R)-pantothenate biosynthesis; (R)-pantoate from 3-methyl-2-oxobutanoate: step 1/2. In terms of biological role, catalyzes the reversible reaction in which hydroxymethyl group from 5,10-methylenetetrahydrofolate is transferred onto alpha-ketoisovalerate to form ketopantoate. In Shewanella loihica (strain ATCC BAA-1088 / PV-4), this protein is 3-methyl-2-oxobutanoate hydroxymethyltransferase.